A 502-amino-acid chain; its full sequence is Glycerol kinase (502 aa).

ADP is bound at residue T15. ATP-binding residues include T15, T16, and S17. T15 provides a ligand contact to sn-glycerol 3-phosphate. Residue R19 participates in ADP binding. Residues R85, E86, and Y137 each coordinate sn-glycerol 3-phosphate. Glycerol is bound by residues R85, E86, and Y137. H233 bears the Phosphohistidine; by HPr mark. Sn-glycerol 3-phosphate is bound at residue D247. Residues D247 and Q248 each contribute to the glycerol site. Residues T269 and G312 each contribute to the ADP site. ATP is bound by residues T269, G312, Q316, and G413. G413 and N417 together coordinate ADP.

The protein belongs to the FGGY kinase family. Homotetramer and homodimer (in equilibrium). Post-translationally, the phosphoenolpyruvate-dependent sugar phosphotransferase system (PTS), including enzyme I, and histidine-containing protein (HPr) are required for the phosphorylation, which leads to the activation of the enzyme.

The enzyme catalyses glycerol + ATP = sn-glycerol 3-phosphate + ADP + H(+). Its pathway is polyol metabolism; glycerol degradation via glycerol kinase pathway; sn-glycerol 3-phosphate from glycerol: step 1/1. Its activity is regulated as follows. Activated by phosphorylation and inhibited by fructose 1,6-bisphosphate (FBP). In terms of biological role, key enzyme in the regulation of glycerol uptake and metabolism. Catalyzes the phosphorylation of glycerol to yield sn-glycerol 3-phosphate. This chain is Glycerol kinase, found in Streptococcus agalactiae serotype Ia (strain ATCC 27591 / A909 / CDC SS700).